We begin with the raw amino-acid sequence, 367 residues long: NAD(P)H-quinone oxidoreductase subunit 1, chloroplastic (367 aa).

Helical transmembrane passes span 29–49 (WIPL…LVVV), 96–116 (VLLF…SYLI), 128–148 (INLG…GLLM), 176–196 (LALC…IDIV), 204–224 (ILGW…IAAL), 266–286 (LVSA…PIPI), 304–324 (VISA…FLFL), and 347–367 (FLLP…IALL).

This sequence belongs to the complex I subunit 1 family. In terms of assembly, NDH is composed of at least 16 different subunits, 5 of which are encoded in the nucleus.

The protein resides in the plastid. It is found in the chloroplast thylakoid membrane. The enzyme catalyses a plastoquinone + NADH + (n+1) H(+)(in) = a plastoquinol + NAD(+) + n H(+)(out). The catalysed reaction is a plastoquinone + NADPH + (n+1) H(+)(in) = a plastoquinol + NADP(+) + n H(+)(out). In terms of biological role, NDH shuttles electrons from NAD(P)H:plastoquinone, via FMN and iron-sulfur (Fe-S) centers, to quinones in the photosynthetic chain and possibly in a chloroplast respiratory chain. The immediate electron acceptor for the enzyme in this species is believed to be plastoquinone. Couples the redox reaction to proton translocation, and thus conserves the redox energy in a proton gradient. The polypeptide is NAD(P)H-quinone oxidoreductase subunit 1, chloroplastic (Mesostigma viride (Green alga)).